Here is a 514-residue protein sequence, read N- to C-terminus: ATP synthase subunit alpha (514 aa).

170–177 (GDRQIGKT) contributes to the ATP binding site.

It belongs to the ATPase alpha/beta chains family. In terms of assembly, F-type ATPases have 2 components, CF(1) - the catalytic core - and CF(0) - the membrane proton channel. CF(1) has five subunits: alpha(3), beta(3), gamma(1), delta(1), epsilon(1). CF(0) has three main subunits: a(1), b(2) and c(9-12). The alpha and beta chains form an alternating ring which encloses part of the gamma chain. CF(1) is attached to CF(0) by a central stalk formed by the gamma and epsilon chains, while a peripheral stalk is formed by the delta and b chains.

It localises to the cell inner membrane. The enzyme catalyses ATP + H2O + 4 H(+)(in) = ADP + phosphate + 5 H(+)(out). Functionally, produces ATP from ADP in the presence of a proton gradient across the membrane. The alpha chain is a regulatory subunit. The protein is ATP synthase subunit alpha of Marinobacter nauticus (strain ATCC 700491 / DSM 11845 / VT8) (Marinobacter aquaeolei).